A 215-amino-acid chain; its full sequence is MIDLYFAPTPNGHKITLFLEEAELDYRLIKVDLGKGGQFRPEFLRISPNNKIPAIVDHSPADGGEPLSLFESGAILLYLAEKTGLFLSHETRERAATLQWLFWQVGGLGPMLGQNHHFNHAAPQTIPYAIERYQVETQRLYHVLNKRLENSPWLGGENYSIADIACWPWVNAWTRQRIDLAMYPAVKNWHERIRSRPATGQALLKAQLGDERSDS.

In terms of domain architecture, GST N-terminal spans 1–87 (MIDLYFAPTP…YLAEKTGLFL (87 aa)). Residues Asn-11, Gln-38, Arg-40, Ile-52, 71–72 (ES), and Arg-132 contribute to the glutathione site. The GST C-terminal domain maps to 90–215 (ETRERAATLQ…AQLGDERSDS (126 aa)).

It belongs to the GST superfamily. Nu-class GSH transferase family. In terms of assembly, homodimer.

Its function is as follows. Exhibits a very robust glutathione (GSH)-dependent disulfide-bond reductase activity toward the model substrate, 2-hydroxyethyl disulfide; the actual physiological substrates are not known. Also has a low GSH-dependent hydroperoxidase activity toward cumene hydroperoxide, but does not reduce H(2)O(2), tert-butyl hydroperoxide, benzyl peroxide, or lauroyl peroxide. Exhibits little or no GSH transferase activity with most typical electrophilic substrates, and has no detectable transferase activity using glutathionylspermidine (GspSH) as the nucleophilic substrate. Is involved in defense against oxidative stress, probably via its peroxidase activity. The sequence is that of Disulfide-bond oxidoreductase YfcG (yfcG) from Escherichia coli (strain K12).